Here is a 212-residue protein sequence, read N- to C-terminus: MFDKNNLKLYFICGTQDIESKTTIIDVVTEALESGITMFQFREKGNGALIGDEKEDLARKLLALCHDYAVPFIVNDDVALANKIGADGIHVGQDDMDVKVFAEQFKGKIIGLSISNIDEYKTSNLAHVDYIGVGPMYATTSKDDANLPVGPEMITKLRAHVNHFPIVAIGGINVENTREVMQAGADGISIISAITKSENISNTISQFLQNVE.

4-amino-2-methyl-5-(diphosphooxymethyl)pyrimidine contacts are provided by residues Gln-40–Lys-44 and Asn-75. Residues Asp-76 and Asp-95 each coordinate Mg(2+). Residue Ser-113 coordinates 4-amino-2-methyl-5-(diphosphooxymethyl)pyrimidine. 2-[(2R,5Z)-2-carboxy-4-methylthiazol-5(2H)-ylidene]ethyl phosphate is bound at residue Thr-139–Ser-141. Lys-142 is a binding site for 4-amino-2-methyl-5-(diphosphooxymethyl)pyrimidine. 2-[(2R,5Z)-2-carboxy-4-methylthiazol-5(2H)-ylidene]ethyl phosphate contacts are provided by residues Gly-171 and Ile-191–Ser-192.

It belongs to the thiamine-phosphate synthase family. The cofactor is Mg(2+).

The enzyme catalyses 2-[(2R,5Z)-2-carboxy-4-methylthiazol-5(2H)-ylidene]ethyl phosphate + 4-amino-2-methyl-5-(diphosphooxymethyl)pyrimidine + 2 H(+) = thiamine phosphate + CO2 + diphosphate. The catalysed reaction is 2-(2-carboxy-4-methylthiazol-5-yl)ethyl phosphate + 4-amino-2-methyl-5-(diphosphooxymethyl)pyrimidine + 2 H(+) = thiamine phosphate + CO2 + diphosphate. It catalyses the reaction 4-methyl-5-(2-phosphooxyethyl)-thiazole + 4-amino-2-methyl-5-(diphosphooxymethyl)pyrimidine + H(+) = thiamine phosphate + diphosphate. Its pathway is cofactor biosynthesis; thiamine diphosphate biosynthesis; thiamine phosphate from 4-amino-2-methyl-5-diphosphomethylpyrimidine and 4-methyl-5-(2-phosphoethyl)-thiazole: step 1/1. Functionally, condenses 4-methyl-5-(beta-hydroxyethyl)thiazole monophosphate (THZ-P) and 2-methyl-4-amino-5-hydroxymethyl pyrimidine pyrophosphate (HMP-PP) to form thiamine monophosphate (TMP). This is Thiamine-phosphate synthase from Staphylococcus saprophyticus subsp. saprophyticus (strain ATCC 15305 / DSM 20229 / NCIMB 8711 / NCTC 7292 / S-41).